A 287-amino-acid polypeptide reads, in one-letter code: Ribosomal RNA small subunit methyltransferase A (287 aa).

Asn-28, Leu-30, Gly-55, Glu-77, Asp-103, and Asn-123 together coordinate S-adenosyl-L-methionine.

Belongs to the class I-like SAM-binding methyltransferase superfamily. rRNA adenine N(6)-methyltransferase family. RsmA subfamily.

The protein localises to the cytoplasm. It carries out the reaction adenosine(1518)/adenosine(1519) in 16S rRNA + 4 S-adenosyl-L-methionine = N(6)-dimethyladenosine(1518)/N(6)-dimethyladenosine(1519) in 16S rRNA + 4 S-adenosyl-L-homocysteine + 4 H(+). Functionally, specifically dimethylates two adjacent adenosines (A1518 and A1519) in the loop of a conserved hairpin near the 3'-end of 16S rRNA in the 30S particle. May play a critical role in biogenesis of 30S subunits. The chain is Ribosomal RNA small subunit methyltransferase A from Rhodopseudomonas palustris (strain BisA53).